A 127-amino-acid polypeptide reads, in one-letter code: MRYGEKEIKEFDVENMEIWPNDAKNDYIIKITLPEFMCCCPRSGYPDFATIYLEYMPDKFVVELKAIKLYINTFMYRNVSHEASINEIYNTLKDKLKPKWIKVVGDFNPRGNVHTVIECCSDMVVPK.

Cys40 acts as the Thioimide intermediate in catalysis. Asp47 functions as the Proton donor in the catalytic mechanism. Substrate-binding positions include 62–64 (VEL) and 81–82 (HE).

It belongs to the GTP cyclohydrolase I family. QueF type 1 subfamily.

The protein localises to the cytoplasm. It carries out the reaction 7-aminomethyl-7-carbaguanine + 2 NADP(+) = 7-cyano-7-deazaguanine + 2 NADPH + 3 H(+). It participates in tRNA modification; tRNA-queuosine biosynthesis. Functionally, catalyzes the NADPH-dependent reduction of 7-cyano-7-deazaguanine (preQ0) to 7-aminomethyl-7-deazaguanine (preQ1). The chain is NADPH-dependent 7-cyano-7-deazaguanine reductase from Campylobacter jejuni subsp. jejuni serotype O:6 (strain 81116 / NCTC 11828).